The following is a 665-amino-acid chain: Long chain acyl-CoA synthetase 2 (665 aa).

228 to 239 (IMYTSGTTGEPK) contacts ATP. The segment at 496-520 (DGWFHTGDIGEWQEDGSMKIIDRKK) is fatty acid-binding.

This sequence belongs to the ATP-dependent AMP-binding enzyme family. Mg(2+) is required as a cofactor. As to expression, expressed along the entire length of the stem, but expression was not entirely epidermal specific, with some expression found in internal cell layers as well. Was expressed in leave epidermal cells, flowers (sepals, petals, stamens, filaments and carpel), siliques and developing seeds. In roots, expression was detected in an internal cell layer, probably the endodermal layer.

It localises to the endoplasmic reticulum. The catalysed reaction is a long-chain fatty acid + ATP + CoA = a long-chain fatty acyl-CoA + AMP + diphosphate. It functions in the pathway lipid metabolism; fatty acid metabolism. Activation of long-chain fatty acids for both synthesis of cellular lipids, and degradation via beta-oxidation. Acts in the cutin pathway. Preferentially uses palmitate, palmitoleate, oleate and linoleate. Required for repression of lateral root formation through its role in cutin biosynthesis and subsequent aerial tissues permeability. This is Long chain acyl-CoA synthetase 2 (LACS2) from Arabidopsis thaliana (Mouse-ear cress).